The following is a 423-amino-acid chain: Large ribosomal subunit protein mL37 (423 aa).

A mitochondrion-targeting transit peptide spans 1 to 29; that stretch reads MALASGPALRALAGSGRLGLGGYGTPKRG.

Belongs to the mitochondrion-specific ribosomal protein mL37 family. As to quaternary structure, component of the mitochondrial ribosome large subunit (39S) which comprises a 16S rRNA and about 50 distinct proteins.

The protein localises to the mitochondrion. The chain is Large ribosomal subunit protein mL37 (Mrpl37) from Mus musculus (Mouse).